Here is a 2038-residue protein sequence, read N- to C-terminus: HEAT repeat-containing protein 5A (2038 aa).

HEAT repeat units follow at residues 850-887 (EVRRLVLTLVLGALESPTPLLRCAASEAWARLAQVADD) and 1082-1119 (LLRRAVLACLRQLVQREAAEVSEHAIMLARDGRDAAAD). The interval 1646-1668 (RSAEVDDGASEKETLPEFGEGKD) is disordered. Position 1647 is a phosphoserine (S1647).

This sequence belongs to the HEATR5 family.

In Mus musculus (Mouse), this protein is HEAT repeat-containing protein 5A (Heatr5a).